A 1092-amino-acid polypeptide reads, in one-letter code: Probable arabinosyltransferase A (1092 aa).

The next 13 membrane-spanning stretches (helical) occupy residues 21–43 (IARLIAVVAGIAGVLLCGLVPLL), 214–233 (AVMVLGLACVIGSIVALALL), 249–271 (GLWTWITDTGVIGGLLIWHIVGA), 324–346 (VWMRLPATAAAIATWLIISRCVL), 353–372 (VAANRVAMLTAGATFLAAWL), 382–399 (PLIAFAVITVWMLVENSI), 404–426 (LWPAAVAIVIAMFSVTLAPQGLI), 517–534 (FAVLVLLLCLFGLIMVLL), 541–563 (GAVSGPLWRLCGSTAIGLLLLIL), 568–590 (WAIQFGAFAGLAGALGGVTAFAF), 602–624 (ALYVTALLFILAWATSGLNGWFY), 639–661 (IAHYPVTTIFLVLAIVGGLLAGW), and 682–704 (ALASTPLLIVATIMVVLELGSMV). Positions 772 to 798 (PSGVSEHLEPEPVGTNPGTPNSEGPVD) are disordered.

The protein belongs to the emb family.

It localises to the cell membrane. In terms of biological role, arabinosyl transferase responsible for the polymerization of arabinose into the arabinan of arabinogalactan. In Mycolicibacterium smegmatis (Mycobacterium smegmatis), this protein is Probable arabinosyltransferase A (embA).